We begin with the raw amino-acid sequence, 600 residues long: Putative fucosyltransferase R654 (600 aa).

It belongs to the glycosyltransferase 10 family.

This chain is Putative fucosyltransferase R654, found in Acanthamoeba polyphaga mimivirus (APMV).